Consider the following 195-residue polypeptide: MAAESIDAELRLGLPGSGGGDGVAAKKRRSASSTVKSEASGTACCGGAGARDVEDGASPASKVQVVGWPPVGSYRRSTFQSSSSSTAAAAKGKGGGETDQGRKNKGGGLYVKVSMDGAPYLRKVDLRMYGGYRELRDALDALFGCFSADASASAAHFAVAYEDKDGDLMLAGDVPWDMFISSCKKLRIMRGSEAR.

2 disordered regions span residues 1-61 (MAAE…SPAS) and 85-107 (STAAAAKGKGGGETDQGRKNKGG). Positions 10–14 (LRLGL) match the EAR-like (transcriptional repression) motif. Residues 108–191 (GLYVKVSMDG…SCKKLRIMRG (84 aa)) form the PB1 domain.

The protein belongs to the Aux/IAA family. As to quaternary structure, homodimers and heterodimers. Highly expressed in flowers. Expressed in etiolated seedlings.

It is found in the nucleus. In terms of biological role, aux/IAA proteins are short-lived transcriptional factors that function as repressors of early auxin response genes at low auxin concentrations. The protein is Auxin-responsive protein IAA14 (IAA14) of Oryza sativa subsp. japonica (Rice).